Reading from the N-terminus, the 915-residue chain is Pentatricopeptide repeat-containing protein At5g65560 (915 aa).

PPR repeat units follow at residues 182–216 (IIGC…KVCP), 217–251 (NIYT…GLDP), 252–286 (DFFT…GCRR), 287–321 (NEVA…ECFP), 322–356 (TVRT…GIKP), 357–391 (NIHT…GLMP), 392–426 (NVIT…KLSP), 427–460 (NTRT…KVLP), 461–495 (DVVT…GLVP), 496–530 (DQWT…GVNP), 531–565 (NVVM…NCLP), 566–600 (NSLT…GLQP), 601–635 (TVST…GTKP), 636–670 (DAHT…GVSP), 671–705 (DLFT…GCEP), 724–758 (KQKG…SVTP), 759–794 (NAKS…GISP), 795–829 (SELV…GHLP), 830–864 (QLES…GYYE), and 865–899 (DELA…GCKF).

Belongs to the PPR family. P subfamily.

This Arabidopsis thaliana (Mouse-ear cress) protein is Pentatricopeptide repeat-containing protein At5g65560.